A 187-amino-acid polypeptide reads, in one-letter code: Peptide deformylase (187 aa).

Residues Cys-96 and His-138 each contribute to the Fe cation site. Glu-139 is an active-site residue. His-142 lines the Fe cation pocket.

Belongs to the polypeptide deformylase family. It depends on Fe(2+) as a cofactor.

It carries out the reaction N-terminal N-formyl-L-methionyl-[peptide] + H2O = N-terminal L-methionyl-[peptide] + formate. In terms of biological role, removes the formyl group from the N-terminal Met of newly synthesized proteins. Requires at least a dipeptide for an efficient rate of reaction. N-terminal L-methionine is a prerequisite for activity but the enzyme has broad specificity at other positions. In Brachyspira hyodysenteriae (strain ATCC 49526 / WA1), this protein is Peptide deformylase.